A 240-amino-acid chain; its full sequence is 2,3,4,5-tetrahydropyridine-2,6-dicarboxylate N-acetyltransferase (240 aa).

Belongs to the transferase hexapeptide repeat family. DapH subfamily.

The enzyme catalyses (S)-2,3,4,5-tetrahydrodipicolinate + acetyl-CoA + H2O = L-2-acetamido-6-oxoheptanedioate + CoA. The protein operates within amino-acid biosynthesis; L-lysine biosynthesis via DAP pathway; LL-2,6-diaminopimelate from (S)-tetrahydrodipicolinate (acetylase route): step 1/3. Functionally, catalyzes the transfer of an acetyl group from acetyl-CoA to tetrahydrodipicolinate. This is 2,3,4,5-tetrahydropyridine-2,6-dicarboxylate N-acetyltransferase from Bacillus cereus (strain AH187).